The sequence spans 421 residues: Synaptotagmin-1 (421 aa).

The Vesicular segment spans residues 1–57 (MVSASRPEALAAPVTTVATLVPHNATEPASPGEGKEDAFSKLKQKFMNELHKIPLPP). A glycan (N-linked (GlcNAc...) asparagine) is linked at N24. Residues 58–79 (WALIAIAIVAVLLVVTCCFCVC) form a helical membrane-spanning segment. S-palmitoyl cysteine attachment occurs at residues C74, C75, C77, C79, and C82. The Cytoplasmic portion of the chain corresponds to 80–421 (KKCLFKKKNK…EVDAMLAVKK (342 aa)). The tract at residues 112–141 (TMKDQALKDDDAETGLTDGEEKEEPKEEEK) is disordered. The span at 121–133 (DDAETGLTDGEEK) shows a compositional bias: acidic residues. T128 carries the phosphothreonine modification. A phospholipid binding region spans residues 135-381 (EPKEEEKLGK…AIGKVFVGYN (247 aa)). The region spanning 141 to 260 (KLGKLQYSLD…DFGHVTEEWR (120 aa)) is the C2 1 domain. Positions 171, 172, and 178 each coordinate Ca(2+). Residue Y229 is modified to Phosphotyrosine. Ca(2+)-binding residues include D230, F231, D232, S235, K236, and D238. S264 carries the phosphoserine modification. The C2 2 domain occupies 272-405 (KLGDICFSLR…NPRRPIAQWH (134 aa)). Residues D303 and D309 each contribute to the Ca(2+) site. Residues S342 and S344 each carry the phosphoserine modification. The Ca(2+) site is built by D363, D365, and D371.

It belongs to the synaptotagmin family. In terms of assembly, homotetramer. Heterodimer; heterodimerizes with SYT2 in presence of calcium. Interacts with SCAMP5. Interacts with STON2. Forms a complex with SV2B, syntaxin 1 and SNAP25. Interacts with SV2A, SV2B and SV2C. Interacts with RIMS1. Interacts with PRRT2. Interacts with DNAJC5 in a phosphorylation-dependent manner. Interacts (via N-terminus) with RAB3A. Interacts with SYT12. Interacts with calmodulin. Interacts with DNM1 (via C-terminal proline-rich domain (PRD)); this interaction facilitates vesicle fission during clathrin-mediated endocytosis (CME). It depends on Ca(2+) as a cofactor. Post-translationally, glycosylated. In terms of tissue distribution, expressed in the brain and adrenal medulla (at protein level).

The protein resides in the cytoplasmic vesicle. It localises to the secretory vesicle membrane. The protein localises to the secretory vesicle. Its subcellular location is the synaptic vesicle membrane. It is found in the chromaffin granule membrane. The protein resides in the cytoplasm. Calcium sensor that participates in triggering neurotransmitter release at the synapse. May have a regulatory role in the membrane interactions during trafficking of synaptic vesicles at the active zone of the synapse. It binds acidic phospholipids with a specificity that requires the presence of both an acidic head group and a diacyl backbone. A Ca(2+)-dependent interaction between synaptotagmin and putative receptors for activated protein kinase C has also been reported. It can bind to at least three additional proteins in a Ca(2+)-independent manner; these are neurexins, syntaxin and AP2. Plays a role in dendrite formation by melanocytes. This is Synaptotagmin-1 from Mus musculus (Mouse).